Consider the following 164-residue polypeptide: Endoribonuclease YbeY (164 aa).

Positions 120, 124, and 130 each coordinate Zn(2+).

Belongs to the endoribonuclease YbeY family. Requires Zn(2+) as cofactor.

The protein localises to the cytoplasm. Its function is as follows. Single strand-specific metallo-endoribonuclease involved in late-stage 70S ribosome quality control and in maturation of the 3' terminus of the 16S rRNA. This chain is Endoribonuclease YbeY, found in Acidothermus cellulolyticus (strain ATCC 43068 / DSM 8971 / 11B).